The sequence spans 124 residues: Kinocilin (124 aa).

Helical transmembrane passes span 13–33 (LQLA…GVSV) and 40–60 (VGGI…YPFL). Residues 80-124 (PNSGPDHGEGRSSNNSNKEGARSGLSTVTRTLEKLKPGGRGTEEG) are disordered. Residues 90–109 (RSSNNSNKEGARSGLSTVTR) are compositionally biased toward polar residues. Basic and acidic residues predominate over residues 110 to 124 (TLEKLKPGGRGTEEG).

As to expression, preferentially expressed in the inner ear and testis. Localizes mainly in the kinocilium of sensory cells in the inner ear. Also present in the manchette of the spermatids, a transient structure enriched in interconnected microtubules (at protein level).

The protein resides in the membrane. Its function is as follows. May play a role in stabilizing dense microtubular networks or in vesicular trafficking. The protein is Kinocilin (Kncn) of Mus musculus (Mouse).